A 431-amino-acid polypeptide reads, in one-letter code: Adenylosuccinate synthetase (431 aa).

GTP is bound by residues 12–18 (GDEGKGK) and 40–42 (GHT). The Proton acceptor role is filled by aspartate 13. Mg(2+) is bound by residues aspartate 13 and glycine 40. Residues 13–16 (DEGK), 38–41 (NAGH), threonine 130, arginine 144, glutamine 225, threonine 240, and arginine 304 contribute to the IMP site. The Proton donor role is filled by histidine 41. A substrate-binding site is contributed by 300–306 (STTGRPR). Residues arginine 306, 332 to 334 (KMD), and 414 to 416 (SIG) each bind GTP.

This sequence belongs to the adenylosuccinate synthetase family. Homodimer. Mg(2+) serves as cofactor.

It is found in the cytoplasm. It catalyses the reaction IMP + L-aspartate + GTP = N(6)-(1,2-dicarboxyethyl)-AMP + GDP + phosphate + 2 H(+). Its pathway is purine metabolism; AMP biosynthesis via de novo pathway; AMP from IMP: step 1/2. Plays an important role in the de novo pathway of purine nucleotide biosynthesis. Catalyzes the first committed step in the biosynthesis of AMP from IMP. In Syntrophotalea carbinolica (strain DSM 2380 / NBRC 103641 / GraBd1) (Pelobacter carbinolicus), this protein is Adenylosuccinate synthetase.